Consider the following 195-residue polypeptide: Calcineurin B homologous protein 1 (195 aa).

Residue G2 is the site of N-myristoyl glycine attachment. EF-hand domains are found at residues 26-61 (SQIT…AINP), 66-101 (IINA…KSKD), 110-145 (SRSN…MVGV), and 151-186 (QLGS…VDVE). D123, D125, D127, K129, E134, D164, D166, D168, and E175 together coordinate Ca(2+).

This sequence belongs to the calcineurin regulatory subunit family. CHP subfamily. Monomer. In terms of processing, phosphorylated. Post-translationally, calcium-binding or N-myristoylation are necessary for the Na(+)/H(+) exchange activities.

It localises to the nucleus. The protein localises to the cytoplasm. The protein resides in the cytoskeleton. It is found in the endomembrane system. Its subcellular location is the endoplasmic reticulum-Golgi intermediate compartment. It localises to the endoplasmic reticulum. The protein localises to the cell membrane. The protein resides in the membrane. Functionally, calcium-binding protein involved in different processes such as regulation of vesicular trafficking, plasma membrane Na(+)/H(+) exchanger and gene transcription. Involved in the constitutive exocytic membrane traffic. Mediates the association between microtubules and membrane-bound organelles of the endoplasmic reticulum and Golgi apparatus and is also required for the targeting and fusion of transcytotic vesicles (TCV) with the plasma membrane. Functions as an integral cofactor in cell pH regulation by controlling plasma membrane-type Na(+)/H(+) exchange activity. Inhibits serum- and GTPase-stimulated Na(+)/H(+) exchange. Plays a role as an inhibitor of ribosomal RNA transcription. Acts as a negative regulator of the calcineurin/NFAT signaling pathway. The sequence is that of Calcineurin B homologous protein 1 (CHP1) from Gallus gallus (Chicken).